The primary structure comprises 515 residues: Proline--tRNA ligase (515 aa).

It belongs to the class-II aminoacyl-tRNA synthetase family. ProS type 3 subfamily. As to quaternary structure, homodimer.

The protein resides in the cytoplasm. The catalysed reaction is tRNA(Pro) + L-proline + ATP = L-prolyl-tRNA(Pro) + AMP + diphosphate. In terms of biological role, catalyzes the attachment of proline to tRNA(Pro) in a two-step reaction: proline is first activated by ATP to form Pro-AMP and then transferred to the acceptor end of tRNA(Pro). The chain is Proline--tRNA ligase from Novosphingobium aromaticivorans (strain ATCC 700278 / DSM 12444 / CCUG 56034 / CIP 105152 / NBRC 16084 / F199).